The following is a 1140-amino-acid chain: Eukaryotic translation initiation factor 3 subunit A (1140 aa).

One can recognise a PCI domain in the interval 319–502; the sequence is LQRMAAHVLL…NSIYFGTDLT (184 aa). 3 stretches are compositionally biased toward basic and acidic residues: residues 589 to 624, 830 to 900, and 921 to 984; these read QNNA…EERE, AAEE…RGGD, and ERND…EPDS. Disordered regions lie at residues 589 to 632 and 830 to 1140; these read QNNA…QNEI and AAEE…VKRR. The span at 987–998 shows a compositional bias: low complexity; the sequence is AAGAKDAGGAPA. Basic and acidic residues-rich tracts occupy residues 999 to 1050, 1058 to 1086, and 1109 to 1130; these read SRDD…EPQR, DAPR…RGDQ, and PRDE…KGGD.

It belongs to the eIF-3 subunit A family. In terms of assembly, component of the eukaryotic translation initiation factor 3 (eIF-3) complex. The eIF-3 complex interacts with pix.

It localises to the cytoplasm. In terms of biological role, RNA-binding component of the eukaryotic translation initiation factor 3 (eIF-3) complex, which is involved in protein synthesis of a specialized repertoire of mRNAs and, together with other initiation factors, stimulates binding of mRNA and methionyl-tRNAi to the 40S ribosome. The eIF-3 complex specifically targets and initiates translation of a subset of mRNAs involved in cell proliferation. The polypeptide is Eukaryotic translation initiation factor 3 subunit A (Drosophila ananassae (Fruit fly)).